Consider the following 560-residue polypeptide: NAD(P)H-quinone oxidoreductase chain 4-3 (560 aa).

Helical transmembrane passes span 5 to 25, 35 to 55, 86 to 106, 114 to 134, 135 to 155, 168 to 188, 208 to 228, 242 to 262, 273 to 293, 310 to 330, 331 to 351, 374 to 394, 417 to 437, and 488 to 508; these read FPWL…IPLL, WYAL…FWHH, ISMP…LAAW, LFYF…VAQD, LLLF…LVSI, FLLY…AMAL, ALEL…LAIF, SAPV…YGLI, HIYF…YGGL, VSHM…GVSG, AMLQ…LAGV, VFAL…MSGF, VMVF…LSML, and VFIA…PKIA.

It belongs to the complex I subunit 4 family.

It localises to the cellular thylakoid membrane. The enzyme catalyses a plastoquinone + NADH + (n+1) H(+)(in) = a plastoquinol + NAD(+) + n H(+)(out). It catalyses the reaction a plastoquinone + NADPH + (n+1) H(+)(in) = a plastoquinol + NADP(+) + n H(+)(out). Its function is as follows. NDH-1 shuttles electrons from NAD(P)H, via FMN and iron-sulfur (Fe-S) centers, to quinones in the respiratory chain. The immediate electron acceptor for the enzyme in this species is believed to be plastoquinone. Couples the redox reaction to proton translocation (for every two electrons transferred, four hydrogen ions are translocated across the cytoplasmic membrane), and thus conserves the redox energy in a proton gradient. In Nostoc sp. (strain PCC 7120 / SAG 25.82 / UTEX 2576), this protein is NAD(P)H-quinone oxidoreductase chain 4-3 (ndhD3).